The primary structure comprises 486 residues: Glutamyl-tRNA(Gln) amidotransferase subunit A (486 aa).

Residues lysine 78 and serine 153 each act as charge relay system in the active site. Catalysis depends on serine 177, which acts as the Acyl-ester intermediate.

Belongs to the amidase family. GatA subfamily. As to quaternary structure, heterotrimer of A, B and C subunits.

It carries out the reaction L-glutamyl-tRNA(Gln) + L-glutamine + ATP + H2O = L-glutaminyl-tRNA(Gln) + L-glutamate + ADP + phosphate + H(+). Allows the formation of correctly charged Gln-tRNA(Gln) through the transamidation of misacylated Glu-tRNA(Gln) in organisms which lack glutaminyl-tRNA synthetase. The reaction takes place in the presence of glutamine and ATP through an activated gamma-phospho-Glu-tRNA(Gln). The polypeptide is Glutamyl-tRNA(Gln) amidotransferase subunit A (Syntrophobacter fumaroxidans (strain DSM 10017 / MPOB)).